Consider the following 373-residue polypeptide: Chloroperoxidase (373 aa).

The first 20 residues, 1–20, serve as a signal peptide directing secretion; that stretch reads MFSKVLPFVGAVAALPHSVR. Pyrrolidone carboxylic acid is present on Gln21. Residue Asn33 is glycosylated (N-linked (GlcNAc...) asparagine). Cys50 lines the heme pocket. Cysteines 100 and 108 form a disulfide. N-linked (GlcNAc...) asparagine glycosylation is present at Asn114. Residues Glu125, His126, and Ser129 each coordinate Mn(2+). The active site involves Glu204. N-linked (GlcNAc...) asparagine glycosylation is present at Asn237. An O-linked (Man) threonine glycan is attached at Thr259. 4 O-linked (Man) serine glycosylation sites follow: Ser260, Ser262, Ser263, and Ser269. An O-linked (Man) threonine glycan is attached at Thr271. An O-linked (Man) serine glycan is attached at Ser272. Thr273 is a glycosylation site (O-linked (Man) threonine). Thr296, Thr304, and Thr314 each carry an O-linked (Man...) threonine glycan. Residues 322 to 373 constitute a propeptide that is removed on maturation; that stretch reads EAAPAATTSMAVFKNPYLEAIGTQDIKNQQAYVSSKAAAMASAMAANKARNL.

Belongs to the chloroperoxidase family. Heme b serves as cofactor. Mn(2+) is required as a cofactor. Post-translationally, N- and O-glycosylated.

It catalyses the reaction RH + Cl(-) + H2O2 = RCl + 2 H2O.. Its function is as follows. Catalyzes peroxidative halogenations involved in the biosynthesis of clardariomycin (2,2-dichloro-1,3-cyclo-pentenedione). The enzyme also has potent catalase activity and in the absence of halide ion, acts as a peroxidase similar to plant peroxidases. The chain is Chloroperoxidase (CPO) from Leptoxyphium fumago (Caldariomyces fumago).